A 257-amino-acid polypeptide reads, in one-letter code: Probable septum site-determining protein MinC (257 aa).

Residues 123–141 are compositionally biased toward low complexity; sequence AVEAAAAPAAEPTPEPGAA. The tract at residues 123–144 is disordered; it reads AVEAAAAPAAEPTPEPGAASQP.

The protein belongs to the MinC family. In terms of assembly, interacts with MinD and FtsZ.

Functionally, cell division inhibitor that blocks the formation of polar Z ring septums. Rapidly oscillates between the poles of the cell to destabilize FtsZ filaments that have formed before they mature into polar Z rings. Prevents FtsZ polymerization. The protein is Probable septum site-determining protein MinC of Burkholderia multivorans (strain ATCC 17616 / 249).